Reading from the N-terminus, the 214-residue chain is Outer-membrane lipoprotein LolB (214 aa).

An N-terminal signal peptide occupies residues 1 to 25; sequence MNNLKRFTKSIFSCIALSGLLFLGG. The N-palmitoyl cysteine moiety is linked to residue Cys-26. Cys-26 carries S-diacylglycerol cysteine lipidation.

Belongs to the LolB family. As to quaternary structure, monomer.

The protein localises to the cell outer membrane. Plays a critical role in the incorporation of lipoproteins in the outer membrane after they are released by the LolA protein. This chain is Outer-membrane lipoprotein LolB, found in Shewanella sp. (strain MR-7).